Consider the following 344-residue polypeptide: Anthranilate phosphoribosyltransferase (344 aa).

Residues Gly-81, Gly-84–Asp-85, Ser-89, Asn-91–Thr-94, Lys-109–Ser-117, and Ala-121 each bind 5-phospho-alpha-D-ribose 1-diphosphate. Position 81 (Gly-81) interacts with anthranilate. Position 93 (Ser-93) interacts with Mg(2+). Residue Asn-112 coordinates anthranilate. An anthranilate-binding site is contributed by Arg-167. Asp-226 and Glu-227 together coordinate Mg(2+).

The protein belongs to the anthranilate phosphoribosyltransferase family. As to quaternary structure, homodimer. Mg(2+) is required as a cofactor.

The catalysed reaction is N-(5-phospho-beta-D-ribosyl)anthranilate + diphosphate = 5-phospho-alpha-D-ribose 1-diphosphate + anthranilate. It participates in amino-acid biosynthesis; L-tryptophan biosynthesis; L-tryptophan from chorismate: step 2/5. Functionally, catalyzes the transfer of the phosphoribosyl group of 5-phosphorylribose-1-pyrophosphate (PRPP) to anthranilate to yield N-(5'-phosphoribosyl)-anthranilate (PRA). The sequence is that of Anthranilate phosphoribosyltransferase from Xanthobacter autotrophicus (strain ATCC BAA-1158 / Py2).